The sequence spans 216 residues: MRDQFISLALILCVLHSACGLYFHISETERKCFIEEVPDETTVIVNYKVELYDPRSNGFMPSSPGIGMHVEVRDSDDKIVLSRVYSSQGRISFTSHTPGEHVICMFSNSTAWFSGAQLRVHLDIQVGEHAIDYAHVAQKEKLTELQLRIRQLLDQVEQITKEQNYQRYREERFRHTSESTNSRVLWWSLAQTVVLVCMGFWQMRHLKSFFEAKKLV.

Positions 1 to 20 (MRDQFISLALILCVLHSACG) are cleaved as a signal peptide. The Lumenal portion of the chain corresponds to 21–182 (LYFHISETER…FRHTSESTNS (162 aa)). The 97-residue stretch at 30-126 (RKCFIEEVPD…QLRVHLDIQV (97 aa)) folds into the GOLD domain. A coiled-coil region spans residues 134–164 (AHVAQKEKLTELQLRIRQLLDQVEQITKEQN). A helical transmembrane segment spans residues 183–203 (RVLWWSLAQTVVLVCMGFWQM). At 204–216 (RHLKSFFEAKKLV) the chain is on the cytoplasmic side. The Prevents secretion from ER motif lies at 213 to 216 (KKLV).

The protein belongs to the EMP24/GP25L family.

It is found in the endoplasmic reticulum membrane. Its function is as follows. Eca and bai are essential, though not redundant, for dorsoventral patterning of the embryo. Specifically required during early embryogenesis for the activity of maternal tkv, while the zygotic tkv is not affected. Involved in Golgi organization. In Drosophila melanogaster (Fruit fly), this protein is Transmembrane emp24 domain-containing protein eca.